Consider the following 468-residue polypeptide: Ribulose bisphosphate carboxylase large chain (468 aa).

An N6,N6,N6-trimethyllysine modification is found at lysine 5. Substrate is bound by residues asparagine 114 and threonine 164. Lysine 166 acts as the Proton acceptor in catalysis. Lysine 168 provides a ligand contact to substrate. The Mg(2+) site is built by lysine 192, aspartate 194, and glutamate 195. N6-carboxylysine is present on lysine 192. The Proton acceptor role is filled by histidine 285. Substrate contacts are provided by arginine 286, histidine 318, and serine 370.

Belongs to the RuBisCO large chain family. Type I subfamily. In terms of assembly, heterohexadecamer of 8 large chains and 8 small chains; disulfide-linked. The disulfide link is formed within the large subunit homodimers. Requires Mg(2+) as cofactor. The disulfide bond which can form in the large chain dimeric partners within the hexadecamer appears to be associated with oxidative stress and protein turnover.

The protein resides in the plastid. Its subcellular location is the chloroplast. The enzyme catalyses 2 (2R)-3-phosphoglycerate + 2 H(+) = D-ribulose 1,5-bisphosphate + CO2 + H2O. The catalysed reaction is D-ribulose 1,5-bisphosphate + O2 = 2-phosphoglycolate + (2R)-3-phosphoglycerate + 2 H(+). Functionally, ruBisCO catalyzes two reactions: the carboxylation of D-ribulose 1,5-bisphosphate, the primary event in carbon dioxide fixation, as well as the oxidative fragmentation of the pentose substrate in the photorespiration process. Both reactions occur simultaneously and in competition at the same active site. The sequence is that of Ribulose bisphosphate carboxylase large chain from Datura stramonium (Jimsonweed).